We begin with the raw amino-acid sequence, 240 residues long: Ribose-5-phosphate isomerase A (240 aa).

Substrate-binding positions include 41–44 (TGST), 94–97 (DGAD), and 107–110 (KGGG). Glu-116 (proton acceptor) is an active-site residue. Position 134 (Lys-134) interacts with substrate.

It belongs to the ribose 5-phosphate isomerase family. As to quaternary structure, homodimer.

It carries out the reaction aldehydo-D-ribose 5-phosphate = D-ribulose 5-phosphate. It participates in carbohydrate degradation; pentose phosphate pathway; D-ribose 5-phosphate from D-ribulose 5-phosphate (non-oxidative stage): step 1/1. Its function is as follows. Catalyzes the reversible conversion of ribose-5-phosphate to ribulose 5-phosphate. This is Ribose-5-phosphate isomerase A from Polaromonas sp. (strain JS666 / ATCC BAA-500).